The sequence spans 124 residues: Immunoglobulin lambda variable 5-52 (124 aa).

An N-terminal signal peptide occupies residues 1–19; that stretch reads MAWTLLLLVLLSHCTGSLS. The framework-1 stretch occupies residues 20–44; that stretch reads QPVLTQPSSHSASSGASVRLTCMLS. The 104-residue stretch at 21 to 124 folds into the Ig-like domain; sequence PVLTQPSSHS…CGTWHSNSKT (104 aa). Residues Cys-41 and Cys-115 are joined by a disulfide bond. Residues 45–53 form a complementarity-determining-1 region; that stretch reads SGFSVGDFW. The interval 54-70 is framework-2; the sequence is IRWYQQKPGNPPRYLLY. The tract at residues 71-77 is complementarity-determining-2; it reads YHSDSNK. Residues 78–115 form a framework-3 region; the sequence is GQGSGVPSRFSGSNDASANAGILRISGLQPEDEADYYC. The tract at residues 116-124 is complementarity-determining-3; the sequence is GTWHSNSKT.

Immunoglobulins are composed of two identical heavy chains and two identical light chains; disulfide-linked.

Its subcellular location is the secreted. The protein localises to the cell membrane. In terms of biological role, v region of the variable domain of immunoglobulin light chains that participates in the antigen recognition. Immunoglobulins, also known as antibodies, are membrane-bound or secreted glycoproteins produced by B lymphocytes. In the recognition phase of humoral immunity, the membrane-bound immunoglobulins serve as receptors which, upon binding of a specific antigen, trigger the clonal expansion and differentiation of B lymphocytes into immunoglobulins-secreting plasma cells. Secreted immunoglobulins mediate the effector phase of humoral immunity, which results in the elimination of bound antigens. The antigen binding site is formed by the variable domain of one heavy chain, together with that of its associated light chain. Thus, each immunoglobulin has two antigen binding sites with remarkable affinity for a particular antigen. The variable domains are assembled by a process called V-(D)-J rearrangement and can then be subjected to somatic hypermutations which, after exposure to antigen and selection, allow affinity maturation for a particular antigen. The sequence is that of Immunoglobulin lambda variable 5-52 from Homo sapiens (Human).